Reading from the N-terminus, the 233-residue chain is LexA repressor (233 aa).

Residues 26–46 constitute a DNA-binding region (H-T-H motif); that stretch reads FDEMKDALDLRSKSGIHRLIT. Active-site for autocatalytic cleavage activity residues include Ser-154 and Lys-192.

It belongs to the peptidase S24 family. In terms of assembly, homodimer.

It carries out the reaction Hydrolysis of Ala-|-Gly bond in repressor LexA.. Functionally, represses a number of genes involved in the response to DNA damage (SOS response), including recA and lexA. In the presence of single-stranded DNA, RecA interacts with LexA causing an autocatalytic cleavage which disrupts the DNA-binding part of LexA, leading to derepression of the SOS regulon and eventually DNA repair. This chain is LexA repressor, found in Nitrobacter winogradskyi (strain ATCC 25391 / DSM 10237 / CIP 104748 / NCIMB 11846 / Nb-255).